A 476-amino-acid polypeptide reads, in one-letter code: Bifunctional protein GlmU (476 aa).

Residues 1-232 (MGDLAAIILA…PVEVMGVNDR (232 aa)) are pyrophosphorylase. UDP-N-acetyl-alpha-D-glucosamine-binding positions include 9 to 12 (LAAG), K23, Q75, and 80 to 81 (GT). A Mg(2+)-binding site is contributed by D105. UDP-N-acetyl-alpha-D-glucosamine is bound by residues G142, E157, N172, and N230. Residue N230 coordinates Mg(2+). Positions 233–253 (AQLAEAGRFARQRINRELMLD) are linker. The tract at residues 254–476 (GVTIVDPAAT…DGWKLKQRDQ (223 aa)) is N-acetyltransferase. Residues R353 and K371 each contribute to the UDP-N-acetyl-alpha-D-glucosamine site. H383 (proton acceptor) is an active-site residue. 2 residues coordinate UDP-N-acetyl-alpha-D-glucosamine: Y386 and N397. Acetyl-CoA is bound by residues 406 to 407 (NY), S425, A443, and R460.

In the N-terminal section; belongs to the N-acetylglucosamine-1-phosphate uridyltransferase family. This sequence in the C-terminal section; belongs to the transferase hexapeptide repeat family. Homotrimer. Mg(2+) is required as a cofactor.

The protein localises to the cytoplasm. It catalyses the reaction alpha-D-glucosamine 1-phosphate + acetyl-CoA = N-acetyl-alpha-D-glucosamine 1-phosphate + CoA + H(+). The catalysed reaction is N-acetyl-alpha-D-glucosamine 1-phosphate + UTP + H(+) = UDP-N-acetyl-alpha-D-glucosamine + diphosphate. It functions in the pathway nucleotide-sugar biosynthesis; UDP-N-acetyl-alpha-D-glucosamine biosynthesis; N-acetyl-alpha-D-glucosamine 1-phosphate from alpha-D-glucosamine 6-phosphate (route II): step 2/2. The protein operates within nucleotide-sugar biosynthesis; UDP-N-acetyl-alpha-D-glucosamine biosynthesis; UDP-N-acetyl-alpha-D-glucosamine from N-acetyl-alpha-D-glucosamine 1-phosphate: step 1/1. It participates in bacterial outer membrane biogenesis; LPS lipid A biosynthesis. In terms of biological role, catalyzes the last two sequential reactions in the de novo biosynthetic pathway for UDP-N-acetylglucosamine (UDP-GlcNAc). The C-terminal domain catalyzes the transfer of acetyl group from acetyl coenzyme A to glucosamine-1-phosphate (GlcN-1-P) to produce N-acetylglucosamine-1-phosphate (GlcNAc-1-P), which is converted into UDP-GlcNAc by the transfer of uridine 5-monophosphate (from uridine 5-triphosphate), a reaction catalyzed by the N-terminal domain. The protein is Bifunctional protein GlmU of Geobacter metallireducens (strain ATCC 53774 / DSM 7210 / GS-15).